The primary structure comprises 71 residues: Calcium dodecin (71 aa).

E18 contacts Ca(2+).

It belongs to the dodecin family. In terms of assembly, homododecamer; 12 subunits assemble to form a hollow sphere with a diameter of about 75 Angstroms. Calcium ions are bound at the interface between three subunits.

Binds calcium ions. May play a role in sequestering additional small ligands. The chain is Calcium dodecin (secE2) from Mycobacterium tuberculosis (strain ATCC 25618 / H37Rv).